The primary structure comprises 445 residues: Maltoporin (445 aa).

The signal sequence occupies residues 1-24 (MITLRKLPLAVAVAAGVMSAQAMA).

It belongs to the porin LamB (TC 1.B.3) family. In terms of assembly, homotrimer formed of three 18-stranded antiparallel beta-barrels, containing three independent channels.

The protein resides in the cell outer membrane. The catalysed reaction is beta-maltose(in) = beta-maltose(out). In terms of biological role, involved in the transport of maltose and maltodextrins. In Shigella flexneri, this protein is Maltoporin.